The primary structure comprises 403 residues: Phosphopentomutase (403 aa).

D13, D298, H303, D339, H340, and H351 together coordinate Mn(2+).

The protein belongs to the phosphopentomutase family. Mn(2+) serves as cofactor.

The protein resides in the cytoplasm. It catalyses the reaction 2-deoxy-alpha-D-ribose 1-phosphate = 2-deoxy-D-ribose 5-phosphate. The catalysed reaction is alpha-D-ribose 1-phosphate = D-ribose 5-phosphate. It participates in carbohydrate degradation; 2-deoxy-D-ribose 1-phosphate degradation; D-glyceraldehyde 3-phosphate and acetaldehyde from 2-deoxy-alpha-D-ribose 1-phosphate: step 1/2. Functionally, isomerase that catalyzes the conversion of deoxy-ribose 1-phosphate (dRib-1-P) and ribose 1-phosphate (Rib-1-P) to deoxy-ribose 5-phosphate (dRib-5-P) and ribose 5-phosphate (Rib-5-P), respectively. This Streptococcus pneumoniae serotype 4 (strain ATCC BAA-334 / TIGR4) protein is Phosphopentomutase.